A 72-amino-acid polypeptide reads, in one-letter code: Sperm protein associated with the nucleus on the X chromosome N1 (72 aa).

The interval 1 to 40 (MEKPTSSTNGEKRKSPCDSNSKNDEMQETPNRDLVLEPSL) is disordered. Basic and acidic residues predominate over residues 10-35 (GEKRKSPCDSNSKNDEMQETPNRDLV).

Belongs to the SPAN-X family.

This chain is Sperm protein associated with the nucleus on the X chromosome N1 (SPANXN1), found in Pan troglodytes (Chimpanzee).